The primary structure comprises 858 residues: Elongation factor 2 (858 aa).

The 346-residue stretch at 17–362 (ANIRNMSVIA…MITIHLPSPV (346 aa)) folds into the tr-type G domain. 26–33 (AHVDHGKS) contributes to the GTP binding site. Position 54 is a phosphothreonine (Thr-54). Thr-57 is modified (phosphothreonine; by EEF2K). Position 59 is a phosphothreonine (Thr-59). An N6-succinyllysine modification is found at Lys-152. Residues 158 to 161 (NKMD) and 216 to 218 (SGL) each bind GTP. The residue at position 235 (Lys-235) is an N6-acetyllysine. Position 239 is an N6-acetyllysine; alternate (Lys-239). Residue Lys-239 forms a Glycyl lysine isopeptide (Lys-Gly) (interchain with G-Cter in SUMO1); alternate linkage. The residue at position 265 (Tyr-265) is a Phosphotyrosine; by CSK. N6-acetyllysine; alternate is present on Lys-272. Lys-272 carries the N6-succinyllysine; alternate modification. Lys-275 is subject to N6-acetyllysine. A Glycyl lysine isopeptide (Lys-Gly) (interchain with G-Cter in SUMO) cross-link involves residue Lys-322. Ser-325 carries the phosphoserine modification. A Phosphotyrosine; by CSK modification is found at Tyr-373. Thr-435 is subject to Phosphothreonine. N6-acetyllysine is present on residues Lys-439 and Lys-445. Ser-502 bears the Phosphoserine mark. Lys-525 carries the post-translational modification N6,N6,N6-trimethyllysine; by EEF2KMT. Residue Lys-529 forms a Glycyl lysine isopeptide (Lys-Gly) (interchain with G-Cter in SUMO) linkage. Lys-572 is subject to N6-succinyllysine. At Ser-595 the chain carries Phosphoserine; by CDK2. Lys-619 is modified (N6-acetyllysine). His-715 is subject to Diphthamide.

It belongs to the TRAFAC class translation factor GTPase superfamily. Classic translation factor GTPase family. EF-G/EF-2 subfamily. Binds to 80S ribosomes. Actively translating ribosomes show mutually exclusive binding of eIF5a (EIF5A or EIF5A2) and EEF2/eEF2. Interacts with SERBP1; interaction sequesters EEF2/eEF2 at the A-site of the ribosome, thereby blocking the interaction sites of the mRNA-tRNA complex, promoting ribosome stabilization and hibernation. Interacts with HABP4; interaction takes place at the A-site of hibernating ribosomes and promotes ribosome stabilization. Component of the mRNA surveillance SURF complex, at least composed of ERF1, ERF3 (ERF3A or ERF3B), EEF2, UPF1/RENT1, SMG1, SMG8 and SMG9. Interacts with RBPMS2. Post-translationally, phosphorylation by EF-2 kinase completely inactivates EF-2; it requires prior phosphorylation by CDK2 at Ser-595 during mitotic prometaphase. Phosphorylation by CSK promotes SUMOylation, proteolytic cleavage, and nuclear translocation if the C-terminal fragment. In terms of processing, diphthamide is 2-[3-carboxyamido-3-(trimethyl-ammonio)propyl]histidine. ISGylated. Post-translationally, proteolytically processed at two sites following phosphorylation by CSK. In terms of processing, SUMOylated following phosphorylation by CSK, promotes proteolytic cleavage.

It is found in the cytoplasm. The protein resides in the nucleus. The enzyme catalyses GTP + H2O = GDP + phosphate + H(+). In terms of biological role, catalyzes the GTP-dependent ribosomal translocation step during translation elongation. During this step, the ribosome changes from the pre-translocational (PRE) to the post-translocational (POST) state as the newly formed A-site-bound peptidyl-tRNA and P-site-bound deacylated tRNA move to the P and E sites, respectively. Catalyzes the coordinated movement of the two tRNA molecules, the mRNA and conformational changes in the ribosome. The polypeptide is Elongation factor 2 (EEF2) (Pongo abelii (Sumatran orangutan)).